The following is a 542-amino-acid chain: Probable quinate permease (542 aa).

At 1–22 (MSILALVEDRPTPKEVYNWKIY) the chain is on the cytoplasmic side. A helical membrane pass occupies residues 23-43 (LLAAVASFTSCMIGYDSAFIG). Residues 44–74 (TTLALSSFREEFGFSTMSKTAVNLVSANIVS) are Extracellular-facing. Residues 75 to 95 (CYQAGAFFGAFFAYPIGHFWG) form a helical membrane-spanning segment. The Cytoplasmic portion of the chain corresponds to 96–97 (RK). The helical transmembrane segment at 98–118 (WGLLFAGTIFTLGAGLMLGAN) threads the bilayer. Over 119–130 (GDRGLGLLYGGR) the chain is Extracellular. Residues 131–151 (VLAGLGVGAGSNITPIYISEM) traverse the membrane as a helical segment. Over 152-159 (APPSIRGR) the chain is Cytoplasmic. The chain crosses the membrane as a helical span at residues 160–180 (LVGVYELGWQIGGLVGFWINY). Residues 181–193 (GVSETLAPSHKQW) are Extracellular-facing. Residues 194-214 (IIPFAVQLIPSGLLLIGAVFL) form a helical membrane-spanning segment. Residues 215-285 (KESPRWLFSR…AGTNKKVMYR (71 aa)) lie on the Cytoplasmic side of the membrane. Residues 286–306 (LFLGSMLFFWQNGSGINAINY) traverse the membrane as a helical segment. The Extracellular segment spans residues 307–325 (YSPTVFKSIGLHGANTSMF). Residues 326 to 346 (STGIFGVVKTVVTFVWLLYLI) form a helical membrane-spanning segment. The Cytoplasmic portion of the chain corresponds to 347–352 (DRLGRR). Residues 353-373 (LLLLIGAAGAAVCLLIVGAYI) form a helical membrane-spanning segment. Over 374–387 (KIADPASNPTQEMT) the chain is Extracellular. The chain crosses the membrane as a helical span at residues 388-408 (GGGIAAMFFFYLYTVFYTPSW). Residues 409 to 456 (NGTPWVMNSEMFEPNMRSLAQACAAASNWLWNFLISRFTPQMFAKMEY) lie on the Cytoplasmic side of the membrane. Residues 457–477 (GVWFFFASLMLLSIVFVFFLV) traverse the membrane as a helical segment. Residues 478 to 542 (PETKGIPLES…EHVSEDLPKV (65 aa)) are Extracellular-facing. Residues 523 to 542 (GYSKTGEQQVEHVSEDLPKV) form a disordered region. Over residues 531-542 (QVEHVSEDLPKV) the composition is skewed to basic and acidic residues.

The protein belongs to the major facilitator superfamily. Sugar transporter (TC 2.A.1.1) family. Interacts with creB. In terms of processing, ubiquitinated. Deubiquitinated by creB, probably to control its activity or amount.

Its subcellular location is the cell membrane. Integral membrane transporter that imports quinic acid to be catabolized as a carbon source. This Aspergillus fumigatus (strain CBS 144.89 / FGSC A1163 / CEA10) (Neosartorya fumigata) protein is Probable quinate permease (qutD).